Consider the following 327-residue polypeptide: Serine/threonine-protein phosphatase PP1-1 (327 aa).

Mn(2+) is bound by residues Asp-63, His-65, Asp-91, and Asn-123. His-124 functions as the Proton donor in the catalytic mechanism. The Mn(2+) site is built by His-172 and His-247. Residues 305–327 form a disordered region; the sequence is GYQGSSQNWHMTPPRKNKTGNSK. Position 316 is a phosphothreonine; by CDC2 (Thr-316). The segment covering 317 to 327 has biased composition (basic residues); that stretch reads PPRKNKTGNSK.

This sequence belongs to the PPP phosphatase family. PP-1 subfamily. As to quaternary structure, oligomer. Mn(2+) is required as a cofactor.

It is found in the nucleus. It catalyses the reaction O-phospho-L-seryl-[protein] + H2O = L-seryl-[protein] + phosphate. The catalysed reaction is O-phospho-L-threonyl-[protein] + H2O = L-threonyl-[protein] + phosphate. Its function is as follows. Essential role in cell cycle control. PP1 is perhaps required for exit from mitosis. This is Serine/threonine-protein phosphatase PP1-1 (dis2) from Schizosaccharomyces pombe (strain 972 / ATCC 24843) (Fission yeast).